We begin with the raw amino-acid sequence, 142 residues long: ATP synthase epsilon chain (142 aa).

This sequence belongs to the ATPase epsilon chain family. F-type ATPases have 2 components, CF(1) - the catalytic core - and CF(0) - the membrane proton channel. CF(1) has five subunits: alpha(3), beta(3), gamma(1), delta(1), epsilon(1). CF(0) has three main subunits: a, b and c.

It localises to the cell inner membrane. Functionally, produces ATP from ADP in the presence of a proton gradient across the membrane. The chain is ATP synthase epsilon chain from Coxiella burnetii (strain CbuK_Q154) (Coxiella burnetii (strain Q154)).